The primary structure comprises 114 residues: Gamma-glutamylcyclotransferase family protein ytfP (114 aa).

Belongs to the gamma-glutamylcyclotransferase family.

The protein resides in the cytoplasm. In terms of biological role, may play a role in antibiotic biosynthesis. The chain is Gamma-glutamylcyclotransferase family protein ytfP (ytfP) from Citrobacter rodentium (strain ICC168) (Citrobacter freundii biotype 4280).